A 560-amino-acid chain; its full sequence is MADGFPWLTAIILLPLVASAFIPLLPDKEGKLVRWYALGVGIADFVLMCYTFWHHYDTSSATFQLVEKYDWLPQIGFSWAVSVDGISMPLVLLAGFVTTLSMLAAWQVNLKPRLFYFLMLVLYSAQIGVFVAQDLLLFFIMWELELVPVYLLVSIWGGQKRRYAATKFLLYTAAASIFILIAGLAMALYGDNTTFDIVELGAKNYPLALELLLYAGLLIAFGVKLAIFPLHTWLPDAHGEASAPVSMILAGVLLKMGGYGLIRLNLELLPDAHIYFAPVLATLGVINIIYGGLNSFAQTHMKRRLAYSSVSHMGFVLLGIASFTDVGVSGAMLQMLSHGLIAAVLFFLAGVTYDRTHTMAMDNLGGIGQAMPKVFALFTAGTMASLALPGMSGFVSELKVFIGVTTSDIYSPTFCTVMVFLAAVGVILTPIYLLSMLRQVFYGTGAELSCNINNGAYQNQEDEGTACFGTDCLLPGEAVYRDASVREVFIAVSFLVLIIGVGVYPKIATQLYDVKTVAVNTQVRQSYTQIAQSNPQIYAKGFFTPQIVEPEVMAVSGVIK.

14 helical membrane-spanning segments follow: residues 5–25 (FPWLTAIILLPLVASAFIPLL), 35–55 (WYALGVGIADFVLMCYTFWHH), 86–106 (ISMPLVLLAGFVTTLSMLAAW), 114–134 (LFYFLMLVLYSAQIGVFVAQD), 135–155 (LLLFFIMWELELVPVYLLVSI), 168–188 (FLLYTAAASIFILIAGLAMAL), 208–228 (ALELLLYAGLLIAFGVKLAIF), 242–262 (SAPVSMILAGVLLKMGGYGLI), 273–293 (HIYFAPVLATLGVINIIYGGL), 310–330 (VSHMGFVLLGIASFTDVGVSG), 331–351 (AMLQMLSHGLIAAVLFFLAGV), 374–394 (VFALFTAGTMASLALPGMSGF), 417–437 (VMVFLAAVGVILTPIYLLSML), and 488–508 (VFIAVSFLVLIIGVGVYPKIA).

It belongs to the complex I subunit 4 family.

It is found in the cellular thylakoid membrane. It catalyses the reaction a plastoquinone + NADH + (n+1) H(+)(in) = a plastoquinol + NAD(+) + n H(+)(out). The enzyme catalyses a plastoquinone + NADPH + (n+1) H(+)(in) = a plastoquinol + NADP(+) + n H(+)(out). NDH-1 shuttles electrons from NAD(P)H, via FMN and iron-sulfur (Fe-S) centers, to quinones in the respiratory chain. The immediate electron acceptor for the enzyme in this species is believed to be plastoquinone. Couples the redox reaction to proton translocation (for every two electrons transferred, four hydrogen ions are translocated across the cytoplasmic membrane), and thus conserves the redox energy in a proton gradient. The protein is NAD(P)H-quinone oxidoreductase chain 4-3 (ndhD3) of Nostoc sp. (strain PCC 7120 / SAG 25.82 / UTEX 2576).